A 273-amino-acid polypeptide reads, in one-letter code: uncharacterized protein (273 aa).

Residues 29 to 131 enclose the AB hydrolase-1 domain; that stretch reads TLVCVHGFLS…VVLLCSSGYL (103 aa). Catalysis depends on residues S102 and H254.

It belongs to the DmpD/TodF/XylF esterase family.

This is an uncharacterized protein from Bacillus subtilis (strain 168).